The primary structure comprises 357 residues: Membrane-bound lytic murein transglycosylase C (357 aa).

The first 15 residues, 1–15 (MKKYLLLALLPFLYA), serve as a signal peptide directing secretion. Cysteine 16 carries the N-palmitoyl cysteine lipid modification. Residue cysteine 16 is the site of S-diacylglycerol cysteine attachment.

The protein belongs to the transglycosylase Slt family.

The protein localises to the cell outer membrane. It catalyses the reaction Exolytic cleavage of the (1-&gt;4)-beta-glycosidic linkage between N-acetylmuramic acid (MurNAc) and N-acetylglucosamine (GlcNAc) residues in peptidoglycan, from either the reducing or the non-reducing ends of the peptidoglycan chains, with concomitant formation of a 1,6-anhydrobond in the MurNAc residue.. In terms of biological role, murein-degrading enzyme. May play a role in recycling of muropeptides during cell elongation and/or cell division. This chain is Membrane-bound lytic murein transglycosylase C, found in Haemophilus influenzae (strain 86-028NP).